We begin with the raw amino-acid sequence, 339 residues long: GTPase Obg (339 aa).

Positions Met1 to Ile159 constitute an Obg domain. Residues Ala160–Glu327 enclose the OBG-type G domain. GTP contacts are provided by residues Gly166–Ser173, Phe191–Tyr195, Asp212–Gly215, Ser279–Asp282, and Ser308–Val310. 2 residues coordinate Mg(2+): Ser173 and Thr193.

The protein belongs to the TRAFAC class OBG-HflX-like GTPase superfamily. OBG GTPase family. Monomer. Mg(2+) serves as cofactor.

Its subcellular location is the cytoplasm. In terms of biological role, an essential GTPase which binds GTP, GDP and possibly (p)ppGpp with moderate affinity, with high nucleotide exchange rates and a fairly low GTP hydrolysis rate. Plays a role in control of the cell cycle, stress response, ribosome biogenesis and in those bacteria that undergo differentiation, in morphogenesis control. This chain is GTPase Obg, found in Bartonella bacilliformis (strain ATCC 35685 / KC583 / Herrer 020/F12,63).